Consider the following 256-residue polypeptide: Thiazole synthase (256 aa).

Residue Lys102 is the Schiff-base intermediate with DXP of the active site. Residues Gly163, Ala189–Gly190, and Ala211–Thr212 each bind 1-deoxy-D-xylulose 5-phosphate.

This sequence belongs to the ThiG family. Homotetramer. Forms heterodimers with either ThiH or ThiS.

It localises to the cytoplasm. The catalysed reaction is [ThiS sulfur-carrier protein]-C-terminal-Gly-aminoethanethioate + 2-iminoacetate + 1-deoxy-D-xylulose 5-phosphate = [ThiS sulfur-carrier protein]-C-terminal Gly-Gly + 2-[(2R,5Z)-2-carboxy-4-methylthiazol-5(2H)-ylidene]ethyl phosphate + 2 H2O + H(+). Its pathway is cofactor biosynthesis; thiamine diphosphate biosynthesis. Its function is as follows. Catalyzes the rearrangement of 1-deoxy-D-xylulose 5-phosphate (DXP) to produce the thiazole phosphate moiety of thiamine. Sulfur is provided by the thiocarboxylate moiety of the carrier protein ThiS. In vitro, sulfur can be provided by H(2)S. The protein is Thiazole synthase of Nocardia farcinica (strain IFM 10152).